A 387-amino-acid chain; its full sequence is MKWLLLLGLLALSECIIHKVPLVRKKSLRKNLIEKGLLKDYLKTHTPNLATKYLPKAAFDSVPTETLENYLDTEYFGTIGIGTPAQDFTVIFDTGSSNLWVPSVYCSSAACSVHNQFNPEDSSTFQATSESLSITYGTGSMTGFLGYDTVKVGNIEDTNQIFGLSESEPGSFLYYAPFDGILGLAYPSISSSDATPVFDNMWNEGLVSEDLFSVYLSSDDESGSVVMFGGIDSSYYTGSLNWVPVSYEGYWQITLDSITMDGETIACADSCQAIVDTGTSLLAGPTSAISNIQSYIGASENSDGEMIVSCSSMYSLPNIVFTINGVQYPVPASAYILEEDDACISGFEGMNLDTYTGELWILGDVFIRQYFTVFDRANNQLGLAAAA.

Residues 1–15 (MKWLLLLGLLALSEC) form the signal peptide. The propeptide at 16 to 59 (IIHKVPLVRKKSLRKNLIEKGLLKDYLKTHTPNLATKYLPKAAF) is activation peptide. Positions 75–384 (YFGTIGIGTP…DRANNQLGLA (310 aa)) constitute a Peptidase A1 domain. The active site involves Asp-93. Disulfide bonds link Cys-106–Cys-111 and Cys-267–Cys-271. Asp-276 is an active-site residue. The cysteines at positions 310 and 343 are disulfide-linked.

Belongs to the peptidase A1 family.

Its subcellular location is the secreted. The enzyme catalyses Preferential cleavage: hydrophobic, preferably aromatic, residues in P1 and P1' positions. Cleaves 1-Phe-|-Val-2, 4-Gln-|-His-5, 13-Glu-|-Ala-14, 14-Ala-|-Leu-15, 15-Leu-|-Tyr-16, 16-Tyr-|-Leu-17, 23-Gly-|-Phe-24, 24-Phe-|-Phe-25 and 25-Phe-|-Tyr-26 bonds in the B chain of insulin.. Its function is as follows. Shows particularly broad specificity; although bonds involving phenylalanine and leucine are preferred, many others are also cleaved to some extent. This Oryctolagus cuniculus (Rabbit) protein is Pepsin-3.